Here is a 534-residue protein sequence, read N- to C-terminus: Apolipoprotein N-acyltransferase (534 aa).

The next 7 helical transmembrane spans lie at 8–28, 31–51, 69–89, 105–125, 127–147, 178–198, and 208–228; these read VILV…AFAV, LPPF…VWLI, AFAV…WWLG, LAIL…VALA, IFWS…GLME, VIGA…PALF, and VALA…ALYL. The region spanning 246–496 is the CN hydrolase domain; the sequence is VQPDIDQAAK…TGFIDATVDS (251 aa). Glu-291 functions as the Proton acceptor in the catalytic mechanism. Lys-355 is an active-site residue. Residue Cys-408 is the Nucleophile of the active site. A helical membrane pass occupies residues 511–531; the sequence is FWLTEALLILIALISREGFIF.

It belongs to the CN hydrolase family. Apolipoprotein N-acyltransferase subfamily.

Its subcellular location is the cell inner membrane. The catalysed reaction is N-terminal S-1,2-diacyl-sn-glyceryl-L-cysteinyl-[lipoprotein] + a glycerophospholipid = N-acyl-S-1,2-diacyl-sn-glyceryl-L-cysteinyl-[lipoprotein] + a 2-acyl-sn-glycero-3-phospholipid + H(+). The protein operates within protein modification; lipoprotein biosynthesis (N-acyl transfer). Its function is as follows. Catalyzes the phospholipid dependent N-acylation of the N-terminal cysteine of apolipoprotein, the last step in lipoprotein maturation. This is Apolipoprotein N-acyltransferase from Rhizobium etli (strain CIAT 652).